A 229-amino-acid chain; its full sequence is Peptidase E (229 aa).

Catalysis depends on charge relay system residues serine 120, aspartate 135, and histidine 157.

It belongs to the peptidase S51 family.

Its subcellular location is the cytoplasm. The enzyme catalyses Dipeptidase E catalyzes the hydrolysis of dipeptides Asp-|-Xaa. It does not act on peptides with N-terminal Glu, Asn or Gln, nor does it cleave isoaspartyl peptides.. Functionally, hydrolyzes dipeptides containing N-terminal aspartate residues. May play a role in allowing the cell to use peptide aspartate to spare carbon otherwise required for the synthesis of the aspartate family of amino acids. In Salmonella typhi, this protein is Peptidase E.